The chain runs to 464 residues: MREKTPKQIVDLLDKYIVGQNEAKKSVAIALYNRYRRAQLPEDVQKDITPKNILMAGPTGVGKTEIARRLADIVDAPFVKVEATKFTEVGYVGRDVESMVRDLANEAVRIVEKEEFVKVESQAIRQANKTLVRLLVPGVKRNNRQNQMQQMQEMMQSLLAGGGMPEETEEVTDEIRNQRLSVAEKLDRGLLENEEVIIEVEQAPKANPMGDMMGQMGMDMSSMLGDMLPKKKVKRTLPVGQARKLLVQEEEKKLVNYDDIYQKAMDRAGQSGIIFIDEIDKITAADKRNSAGVSREGVQRDILPIVEGSTVSTKYGPLSTDHILFIAAGAFAESKPSDLIPELQGRFPIRVELNALTKDDFVRILKDPQNSLLKQYIALLKADGVDLVFTAEAVDKIAEIAFEVNQGTDNIGARRLATILEKLLEEVLYEGPDMEMGQITITQAYVEQKLSDIVKNKDLTKFIL.

Residues valine 18, glycine 60 to glutamate 65, aspartate 277, glutamate 342, and arginine 414 each bind ATP.

This sequence belongs to the ClpX chaperone family. HslU subfamily. As to quaternary structure, a double ring-shaped homohexamer of HslV is capped on each side by a ring-shaped HslU homohexamer. The assembly of the HslU/HslV complex is dependent on binding of ATP.

The protein localises to the cytoplasm. In terms of biological role, ATPase subunit of a proteasome-like degradation complex; this subunit has chaperone activity. The binding of ATP and its subsequent hydrolysis by HslU are essential for unfolding of protein substrates subsequently hydrolyzed by HslV. HslU recognizes the N-terminal part of its protein substrates and unfolds these before they are guided to HslV for hydrolysis. In Lactobacillus delbrueckii subsp. bulgaricus (strain ATCC BAA-365 / Lb-18), this protein is ATP-dependent protease ATPase subunit HslU.